Reading from the N-terminus, the 461-residue chain is tRNA modification GTPase MnmE (461 aa).

Residues Arg-27, Glu-89, and Arg-128 each contribute to the (6S)-5-formyl-5,6,7,8-tetrahydrofolate site. The TrmE-type G domain occupies 224–382; sequence GLATAIVGRP…LEELINKLFF (159 aa). Asn-234 contacts K(+). Residues 234–239, 253–259, and 278–281 contribute to the GTP site; these read NVGKSS, TDVAGTT, and DTAG. Position 238 (Ser-238) interacts with Mg(2+). 3 residues coordinate K(+): Thr-253, Val-255, and Thr-258. Thr-259 is a binding site for Mg(2+). Lys-461 contributes to the (6S)-5-formyl-5,6,7,8-tetrahydrofolate binding site.

Belongs to the TRAFAC class TrmE-Era-EngA-EngB-Septin-like GTPase superfamily. TrmE GTPase family. In terms of assembly, homodimer. Heterotetramer of two MnmE and two MnmG subunits. K(+) is required as a cofactor.

It localises to the cytoplasm. Its function is as follows. Exhibits a very high intrinsic GTPase hydrolysis rate. Involved in the addition of a carboxymethylaminomethyl (cmnm) group at the wobble position (U34) of certain tRNAs, forming tRNA-cmnm(5)s(2)U34. This chain is tRNA modification GTPase MnmE, found in Lactobacillus helveticus (strain DPC 4571).